Consider the following 344-residue polypeptide: Probable dual-specificity RNA methyltransferase RlmN (344 aa).

The Proton acceptor role is filled by Glu-92. Residues 98 to 325 (DEDRATLCVS…TTIRASRGED (228 aa)) enclose the Radical SAM core domain. An intrachain disulfide couples Cys-105 to Cys-330. Residues Cys-112, Cys-116, and Cys-119 each contribute to the [4Fe-4S] cluster site. S-adenosyl-L-methionine-binding positions include 157–158 (GE), Ser-189, 211–213 (SLH), and His-287. The active-site S-methylcysteine intermediate is Cys-330.

This sequence belongs to the radical SAM superfamily. RlmN family. [4Fe-4S] cluster serves as cofactor.

It is found in the cytoplasm. It carries out the reaction adenosine(2503) in 23S rRNA + 2 reduced [2Fe-2S]-[ferredoxin] + 2 S-adenosyl-L-methionine = 2-methyladenosine(2503) in 23S rRNA + 5'-deoxyadenosine + L-methionine + 2 oxidized [2Fe-2S]-[ferredoxin] + S-adenosyl-L-homocysteine. The enzyme catalyses adenosine(37) in tRNA + 2 reduced [2Fe-2S]-[ferredoxin] + 2 S-adenosyl-L-methionine = 2-methyladenosine(37) in tRNA + 5'-deoxyadenosine + L-methionine + 2 oxidized [2Fe-2S]-[ferredoxin] + S-adenosyl-L-homocysteine. In terms of biological role, specifically methylates position 2 of adenine 2503 in 23S rRNA and position 2 of adenine 37 in tRNAs. This Bacteroides fragilis (strain ATCC 25285 / DSM 2151 / CCUG 4856 / JCM 11019 / LMG 10263 / NCTC 9343 / Onslow / VPI 2553 / EN-2) protein is Probable dual-specificity RNA methyltransferase RlmN.